A 365-amino-acid chain; its full sequence is PR domain zinc finger protein 12 (365 aa).

Positions Val-86 to Gly-203 constitute an SET domain. 3 consecutive C2H2-type zinc fingers follow at residues Met-243 to His-265, Phe-271 to His-293, and Tyr-299 to His-323. Residues Gln-318–Pro-338 form a disordered region. Low complexity predominate over residues Ala-329–Pro-338.

It belongs to the class V-like SAM-binding methyltransferase superfamily. As to quaternary structure, interacts with EHMT2.

It localises to the nucleus. Functionally, transcriptional regulator necessary for the development of nociceptive neurons, playing a key role in determining the nociceptive lineage from neural crest cell progenitors. Initiates neurogenesis and activates downstream pro-neuronal transcription factors, such as NEUROD1, BRN3A, and ISL1, specifically within nociceptive neurons, while repressing non-nociceptor cell fates. Essential for the proper function of nociceptors in adults, influencing both their excitability and their gene expression, thereby impacting how these neurons respond to various pain stimuli. In Mus musculus (Mouse), this protein is PR domain zinc finger protein 12 (Prdm12).